A 28-amino-acid chain; its full sequence is AVWKDFLKNIGKAAGKAVLNSVTDMVNE.

As to expression, expressed by the skin glands.

It is found in the secreted. Its function is as follows. Probable antimicrobial peptide which stimulates insulin-release in glucose-responsive BRIN-BD 11 cells. The sequence is that of Dermaseptin-SP1 from Agalychnis spurrelli (Gliding leaf frog).